We begin with the raw amino-acid sequence, 348 residues long: Outer membrane protein A (348 aa).

The N-terminal stretch at 1-21 (MKKTAIAIAVALAGFATVAQA) is a signal peptide. The next 8 membrane-spanning stretches (beta stranded) occupy residues 27–37 (TWYTGAKLGWS), 55–66 (QLGAGAFGGYQV), 70–78 (VGFEMGYDW), 96–107 (QGVQLTAKLGYP), 112–120 (LDIYTRLGG), 146–155 (PVFAGGVEYA), 160–167 (IATRLEYQ), and 186–194 (LLSLGVSYR). The segment at 201-210 (APVVAPAPAP) is hinge-like. Repeat copies occupy residues 205–206 (AP), 207–208 (AP), and 209–210 (AP). A 3 X 2 AA tandem repeats of A-P region spans residues 205–210 (APAPAP). The region spanning 212-340 (VQTKHFTLKS…RVEIEVKGIK (129 aa)) is the OmpA-like domain. A disulfide bridge links Cys-313 with Cys-325.

This sequence belongs to the outer membrane OOP (TC 1.B.6) superfamily. OmpA family. As to quaternary structure, monomer and homodimer. In terms of assembly, (Microbial infection) Upon infection with phage Sf6 associates with the mature bacteriophage capsid. Was originally suggested to be within the bacteriophage capsid. This has been disproven.

The protein resides in the extracellular vesicle. The protein localises to the cell outer membrane. Functionally, with TolR probably plays a role in maintaining the position of the peptidoglycan cell wall in the periplasm. Acts as a porin with low permeability that allows slow penetration of small solutes; an internal gate slows down solute passage. Its function is as follows. Required for conjugation with F-type plasmids; probably serves as the mating receptor on recipient cells. (Microbial infection) Serves as a secondary receptor during phage Sf6 infection; infection requires both lipopolysaccharide (LPS) and the OmpA beta-barrel. The sequence is that of Outer membrane protein A from Shigella flexneri.